Reading from the N-terminus, the 211-residue chain is Protein GrpE (211 aa).

Residues 1–10 (MTDDTKKPGP) are compositionally biased toward basic and acidic residues. Disordered stretches follow at residues 1–37 (MTDDTKKPGPDADVAEEFVDPAQAGEEQAETAEPDPV) and 187–211 (AKGGPKAEPSASAEPGTSSLNEKDA). Acidic residues predominate over residues 27 to 36 (EQAETAEPDP). A compositionally biased stretch (polar residues) spans 201 to 211 (PGTSSLNEKDA).

It belongs to the GrpE family. In terms of assembly, homodimer.

The protein resides in the cytoplasm. Its function is as follows. Participates actively in the response to hyperosmotic and heat shock by preventing the aggregation of stress-denatured proteins, in association with DnaK and GrpE. It is the nucleotide exchange factor for DnaK and may function as a thermosensor. Unfolded proteins bind initially to DnaJ; upon interaction with the DnaJ-bound protein, DnaK hydrolyzes its bound ATP, resulting in the formation of a stable complex. GrpE releases ADP from DnaK; ATP binding to DnaK triggers the release of the substrate protein, thus completing the reaction cycle. Several rounds of ATP-dependent interactions between DnaJ, DnaK and GrpE are required for fully efficient folding. The sequence is that of Protein GrpE from Agrobacterium fabrum (strain C58 / ATCC 33970) (Agrobacterium tumefaciens (strain C58)).